The chain runs to 662 residues: Transketolase (662 aa).

H28 serves as a coordination point for substrate. Thiamine diphosphate contacts are provided by residues H68 and G115–L117. Position 156 (D156) interacts with Mg(2+). Thiamine diphosphate is bound by residues G157 and N186. Residues N186 and I188 each contribute to the Mg(2+) site. Substrate contacts are provided by H261, R356, and S383. A thiamine diphosphate-binding site is contributed by H261. E410 functions as the Proton donor in the catalytic mechanism. Position 436 (F436) interacts with thiamine diphosphate. Residues H460, D468, and R519 each contribute to the substrate site.

This sequence belongs to the transketolase family. Homodimer. Requires Mg(2+) as cofactor. The cofactor is Ca(2+). Mn(2+) is required as a cofactor. It depends on Co(2+) as a cofactor. Thiamine diphosphate serves as cofactor.

It catalyses the reaction D-sedoheptulose 7-phosphate + D-glyceraldehyde 3-phosphate = aldehydo-D-ribose 5-phosphate + D-xylulose 5-phosphate. It participates in carbohydrate biosynthesis; Calvin cycle. Its pathway is carbohydrate degradation; pentose phosphate pathway. Its function is as follows. Catalyzes the transfer of a two-carbon ketol group from a ketose donor to an aldose acceptor, via a covalent intermediate with the cofactor thiamine pyrophosphate. In Staphylococcus epidermidis (strain ATCC 35984 / DSM 28319 / BCRC 17069 / CCUG 31568 / BM 3577 / RP62A), this protein is Transketolase (tkt).